The sequence spans 1891 residues: TATA-binding protein-associated factor mot1 (1891 aa).

An HEAT 1 repeat occupies 30–68 (PDELFNLLGRILPYLRSKSWDTRAAAAKAIGLIVANADT). Disordered stretches follow at residues 184-216 (FVASREHSIQGTSQPLASPIEPANGEESGLSKR), 241-283 (LSSR…LDRS), and 295-316 (FKGASVPENPLLQPESTEEGPN). Over residues 264-275 (ENGEERNGDSKP) the composition is skewed to basic and acidic residues. HEAT repeat units follow at residues 473 to 511 (SKLMDGVLEAVMKGLGDYDDDVRAVSAATLVPIAEEFVK) and 569 to 606 (SSFGKLVPRLYPFLRHTITSVRSAVLRALMTFLQLEGE). Low complexity predominate over residues 699–710 (SAAAPARSSPAS). Positions 699–740 (SAAAPARSSPASNTPEGTKGRRRKSEKKEAPPPSAHNVDGHM) are disordered. 4 HEAT repeats span residues 957 to 996 (PKKPSHIIKGMMDSIKKEENAELQQRSATAITSLVEYYTT), 1139 to 1177 (YPWVVDLLPLVVKALQCKLSVIRYAAAKCFATICSVITV), 1181 to 1216 (TMLVEKVLPMINDALDVHHRQGAVECIYHLIHVMED), and 1219 to 1257 (LPYVIFLVVPVLGRMSDSDNEVRLLATTSFATLVKLVPL). Residues 1316–1489 (AFLNRYNLHG…WSLFDFLMPG (174 aa)) enclose the Helicase ATP-binding domain. Residue 1329–1336 (DDMGLGKT) coordinates ATP. The DEAH box signature appears at 1440 to 1443 (DEGH). One copy of the HEAT 8 repeat lies at 1526-1565 (EALHKQVLPFLLRRLKEEVLNDLPPKIIQNYYCDPSELQR). The region spanning 1663–1813 (DLSGASYVSP…STVVNQQNAG (151 aa)) is the Helicase C-terminal domain.

It belongs to the SNF2/RAD54 helicase family. As to quaternary structure, forms the NCT transcriptional regulatory complex with nctA and nctB.

It localises to the nucleus. Functionally, regulates transcription in association with TATA binding protein (TBP). Removes TBP from the TATA box via its C-terminal ATPase activity. Both transcription activation and repression require its ATPase activity. Part of the NCT transcriptional regulatory complex that acts as a key regulator of ergosterol biosynthesis and the azole exporter cdr1B. The NCT complex binds the promoters of genes linked to azole susceptibility, and especially represses the expression of cdr1B transporter. In Aspergillus fumigatus (strain CBS 144.89 / FGSC A1163 / CEA10) (Neosartorya fumigata), this protein is TATA-binding protein-associated factor mot1.